Reading from the N-terminus, the 681-residue chain is DNA ligase (681 aa).

Residues 45–49, 94–95, and Glu120 contribute to the NAD(+) site; these read DFDFD and SL. Catalysis depends on Lys122, which acts as the N6-AMP-lysine intermediate. NAD(+) is bound by residues Arg143, Glu177, Lys289, and Lys313. Positions 403, 406, 421, and 426 each coordinate Zn(2+). The BRCT domain maps to 593–681; sequence ADQQPFAGQS…SLKIDFKNLI (89 aa).

This sequence belongs to the NAD-dependent DNA ligase family. LigA subfamily. It depends on Mg(2+) as a cofactor. The cofactor is Mn(2+).

The catalysed reaction is NAD(+) + (deoxyribonucleotide)n-3'-hydroxyl + 5'-phospho-(deoxyribonucleotide)m = (deoxyribonucleotide)n+m + AMP + beta-nicotinamide D-nucleotide.. In terms of biological role, DNA ligase that catalyzes the formation of phosphodiester linkages between 5'-phosphoryl and 3'-hydroxyl groups in double-stranded DNA using NAD as a coenzyme and as the energy source for the reaction. It is essential for DNA replication and repair of damaged DNA. This is DNA ligase from Leptospira interrogans serogroup Icterohaemorrhagiae serovar Lai (strain 56601).